Reading from the N-terminus, the 375-residue chain is 2-isopropylmalate synthase (375 aa).

The Pyruvate carboxyltransferase domain maps to 1–124 (GRTSIDNLCR…FTNIKHNELY (124 aa)). Mn(2+) contacts are provided by His59, His61, and Asn95. Residues 250 to 375 (QLKYFSIHSG…SKIKNIKNKK (126 aa)) are regulatory domain.

The protein belongs to the alpha-IPM synthase/homocitrate synthase family. LeuA type 1 subfamily. As to quaternary structure, homodimer.

The protein localises to the cytoplasm. It catalyses the reaction 3-methyl-2-oxobutanoate + acetyl-CoA + H2O = (2S)-2-isopropylmalate + CoA + H(+). It participates in amino-acid biosynthesis; L-leucine biosynthesis; L-leucine from 3-methyl-2-oxobutanoate: step 1/4. Its function is as follows. Catalyzes the condensation of the acetyl group of acetyl-CoA with 3-methyl-2-oxobutanoate (2-ketoisovalerate) to form 3-carboxy-3-hydroxy-4-methylpentanoate (2-isopropylmalate). The chain is 2-isopropylmalate synthase from Buchnera aphidicola subsp. Thelaxes suberi.